Consider the following 299-residue polypeptide: Coenzyme PQQ synthesis protein B (299 aa).

Belongs to the PqqB family.

The protein operates within cofactor biosynthesis; pyrroloquinoline quinone biosynthesis. Its function is as follows. May be involved in the transport of PQQ or its precursor to the periplasm. The sequence is that of Coenzyme PQQ synthesis protein B from Methylobacterium nodulans (strain LMG 21967 / CNCM I-2342 / ORS 2060).